A 308-amino-acid chain; its full sequence is D-alanine--D-alanine ligase (308 aa).

An ATP-grasp domain is found at K109–E302. M136 to T186 serves as a coordination point for ATP. Mg(2+) contacts are provided by D253, E269, and N271.

The protein belongs to the D-alanine--D-alanine ligase family. The cofactor is Mg(2+). Mn(2+) is required as a cofactor.

It localises to the cytoplasm. It carries out the reaction 2 D-alanine + ATP = D-alanyl-D-alanine + ADP + phosphate + H(+). It participates in cell wall biogenesis; peptidoglycan biosynthesis. In terms of biological role, cell wall formation. This Dinoroseobacter shibae (strain DSM 16493 / NCIMB 14021 / DFL 12) protein is D-alanine--D-alanine ligase.